Consider the following 134-residue polypeptide: Large ribosomal subunit protein bL20 (134 aa).

Belongs to the bacterial ribosomal protein bL20 family.

Binds directly to 23S ribosomal RNA and is necessary for the in vitro assembly process of the 50S ribosomal subunit. It is not involved in the protein synthesizing functions of that subunit. The polypeptide is Large ribosomal subunit protein bL20 (Rhizobium rhizogenes (strain K84 / ATCC BAA-868) (Agrobacterium radiobacter)).